Here is a 480-residue protein sequence, read N- to C-terminus: Aspartyl/glutamyl-tRNA(Asn/Gln) amidotransferase subunit B (480 aa).

The protein belongs to the GatB/GatE family. GatB subfamily. In terms of assembly, heterotrimer of A, B and C subunits.

It carries out the reaction L-glutamyl-tRNA(Gln) + L-glutamine + ATP + H2O = L-glutaminyl-tRNA(Gln) + L-glutamate + ADP + phosphate + H(+). The enzyme catalyses L-aspartyl-tRNA(Asn) + L-glutamine + ATP + H2O = L-asparaginyl-tRNA(Asn) + L-glutamate + ADP + phosphate + 2 H(+). Functionally, allows the formation of correctly charged Asn-tRNA(Asn) or Gln-tRNA(Gln) through the transamidation of misacylated Asp-tRNA(Asn) or Glu-tRNA(Gln) in organisms which lack either or both of asparaginyl-tRNA or glutaminyl-tRNA synthetases. The reaction takes place in the presence of glutamine and ATP through an activated phospho-Asp-tRNA(Asn) or phospho-Glu-tRNA(Gln). This is Aspartyl/glutamyl-tRNA(Asn/Gln) amidotransferase subunit B from Streptococcus agalactiae serotype III (strain NEM316).